Consider the following 238-residue polypeptide: N-methyltransferase vrtF (238 aa).

The protein belongs to the methyltransferase superfamily.

The protein operates within secondary metabolite biosynthesis; terpenoid biosynthesis. In terms of biological role, N-methyltransferase; part of the gene cluster that mediates the biosynthesis of viridicatumtoxin, a tetracycline-like fungal meroterpenoid with a unique, fused spirobicyclic ring system. The first step of the pathway is the production of the malonamoyl-CoA starter unit for the polyketide synthase vrtA. The aldolase vrtJ may be involved in the synthesis of the malonamate substrate for malonamoyl-CoA synthetase vrtB. The polyketide synthase vrtA then may utilize the malonamoyl-CoA starter unit, followed by sequential condensation of eight malonyl-CoA units to form the polyketide backbone. The cyclization of the last ring could be mediated by the lactamase-like protein vrtG. The proposed post-PKS tailoring steps are a hydroxylation at C5 catalyzed the cytochrome P450 monooxygenase vrtE, a hydroxylation at C12a catalyzed by VrtH and/or VrtI, and an O-methylation by the O-methyltransferase vrtF. VrtC is then proposed to catalyze the transfer of a geranyl group synthesized by vrtD to the aromatic C ring of the tetracyclic polyketide intermediate of viridicatumtoxin to yield previridicatumtoxin. Finally, the cytochrome P450 monooxygenase vrtK catalyzes the spirocyclization of the geranyl moiety of previridicatumtoxin to afford viridicatumtoxin. This is N-methyltransferase vrtF from Penicillium aethiopicum.